The sequence spans 270 residues: Glutamate 5-kinase (270 aa).

An ATP-binding site is contributed by K17. Residues S57, D144, and N160 each contribute to the substrate site. ATP contacts are provided by residues S180 to D181 and T222 to K228.

It belongs to the glutamate 5-kinase family.

The protein localises to the cytoplasm. The catalysed reaction is L-glutamate + ATP = L-glutamyl 5-phosphate + ADP. It participates in amino-acid biosynthesis; L-proline biosynthesis; L-glutamate 5-semialdehyde from L-glutamate: step 1/2. Catalyzes the transfer of a phosphate group to glutamate to form L-glutamate 5-phosphate. The chain is Glutamate 5-kinase from Lactococcus lactis subsp. cremoris (strain SK11).